Consider the following 107-residue polypeptide: Large ribosomal subunit protein bL21c (107 aa).

This sequence belongs to the bacterial ribosomal protein bL21 family. Part of the 50S ribosomal subunit.

It is found in the plastid. Its subcellular location is the chloroplast. This protein binds to 23S rRNA. The sequence is that of Large ribosomal subunit protein bL21c from Cyanidioschyzon merolae (strain NIES-3377 / 10D) (Unicellular red alga).